A 241-amino-acid chain; its full sequence is NLP effector protein 7 (241 aa).

The signal sequence occupies residues 1–19 (MHLCALLIAAAGVLASVRA). Residues 105 to 115 (AIMYAWYFPKA) carry the Conserved undecapeptide motif motif. The short motif at 125 to 131 (GSRHYWL) is the Conserved heptapeptide motif element. N144 is a glycosylation site (N-linked (GlcNAc...) asparagine).

The protein belongs to the Necrosis inducing protein (NPP1) family.

It localises to the secreted. Its function is as follows. Secreted effector that acts as a pathogen-associated molecular pattern (PAMP) recognized by the plant immune system. Induces necrosis in Nicotiana benthamiana leaves and can induce Phytophthora capsici resistance in Nicotiana benthamiana. Also significantly improves disease resistance of Arabidopsis thaliana to Hyaloperonospora arabidopsidis. causes an inhibition of plant growth which is typically associated with enhanced immunity when over-expressed in Arabidopsis. This is NLP effector protein 7 from Plasmopara viticola (Downy mildew of grapevine).